A 498-amino-acid chain; its full sequence is Tumor necrosis factor receptor superfamily member 8 (498 aa).

An N-terminal signal peptide occupies residues 1 to 18 (MSALLTAAGLLFLGMLQA). The Extracellular segment spans residues 19 to 287 (FPTDRPLKTT…STGTPFLDPG (269 aa)). 2 TNFR-Cys repeats span residues 68–105 (QCAP…PRIC) and 106–146 (ECQP…DTIC). 5 disulfide bridges follow: cysteine 69-cysteine 81, cysteine 84-cysteine 97, cysteine 87-cysteine 105, cysteine 107-cysteine 121, and cysteine 128-cysteine 146. The tract at residues 142–168 (KDTICELPSSGSGPNCSNPGDRKTLTS) is disordered. A compositionally biased stretch (low complexity) spans 149–160 (PSSGSGPNCSNP). 3 N-linked (GlcNAc...) asparagine glycosylation sites follow: asparagine 156, asparagine 183, and asparagine 229. Residues 204–256 (ELVKVPESSSSKAREPSPDPGNAEKNMTLELPSPGTLPDISTSENSKEPASTA) form a disordered region. Residues 242-256 (DISTSENSKEPASTA) show a composition bias toward polar residues. The helical transmembrane segment at 288–308 (PVLFWVAMVVLLVGSGSFLLC) threads the bilayer. Residues 309-498 (YWKACRRRFQ…DHGPTTVSEK (190 aa)) are Cytoplasmic-facing. Positions 338–358 (DSCPTEKLTQPQRSGSVTDPS) are enriched in polar residues. Disordered regions lie at residues 338 to 370 (DSCP…SPPP), 389 to 411 (LDDS…VSTE), and 436 to 498 (EVPE…VSEK). Phosphoserine is present on residues serine 339 and serine 353. Basic and acidic residues-rich tracts occupy residues 402–411 (EPPEPRVSTE), 456–465 (EVDHAPHYPE), and 484–498 (EGGK…VSEK).

This sequence belongs to the TNFR8 family. In terms of assembly, interacts with TRAF1, TRAF2, TRAF3 and TRAF5. Detected in thymus and in activated splenocytes.

The protein localises to the cell membrane. Receptor for TNFSF8/CD30L. May play a role in the regulation of cellular growth and transformation of activated lymphoblasts. Regulates gene expression through activation of NF-kappa-B. This Mus musculus (Mouse) protein is Tumor necrosis factor receptor superfamily member 8.